The primary structure comprises 94 residues: Protein RESPONSE TO LOW SULFUR 2 (94 aa).

The stretch at 15–63 (VDELRRKNGEMEKAVEEMKKEMLQLWRRTQVAEEAEERLCSQLAELEAE) forms a coiled coil.

In terms of biological role, may be involved in defense responses monitoring. Probably implicated into osmotic stress signaling. The protein is Protein RESPONSE TO LOW SULFUR 2 of Arabidopsis thaliana (Mouse-ear cress).